The following is a 568-amino-acid chain: uncharacterized protein (568 aa).

This is an uncharacterized protein from Rickettsia prowazekii (strain Madrid E).